An 861-amino-acid polypeptide reads, in one-letter code: Leucine--tRNA ligase (861 aa).

The 'HIGH' region motif lies at 42–52 (PYPSGKLHMGH). The short motif at 618-622 (KMSKS) is the 'KMSKS' region element. Residue Lys621 coordinates ATP.

It belongs to the class-I aminoacyl-tRNA synthetase family.

The protein resides in the cytoplasm. The catalysed reaction is tRNA(Leu) + L-leucine + ATP = L-leucyl-tRNA(Leu) + AMP + diphosphate. This chain is Leucine--tRNA ligase, found in Buchnera aphidicola subsp. Baizongia pistaciae (strain Bp).